Consider the following 284-residue polypeptide: 2-dehydro-3-deoxyphosphooctonate aldolase (284 aa).

Belongs to the KdsA family.

It is found in the cytoplasm. The catalysed reaction is D-arabinose 5-phosphate + phosphoenolpyruvate + H2O = 3-deoxy-alpha-D-manno-2-octulosonate-8-phosphate + phosphate. It functions in the pathway carbohydrate biosynthesis; 3-deoxy-D-manno-octulosonate biosynthesis; 3-deoxy-D-manno-octulosonate from D-ribulose 5-phosphate: step 2/3. Its pathway is bacterial outer membrane biogenesis; lipopolysaccharide biosynthesis. This is 2-dehydro-3-deoxyphosphooctonate aldolase from Burkholderia orbicola (strain MC0-3).